Consider the following 225-residue polypeptide: MYSIRVLAIECIRLAPEYLPFEEGWRMQQELHKKITESQTNKNRQASMIFCEHEPVYTAGARTRSWEMPQNEKVIRVGRGGKITWHGPGQLVGYPILSLGATPDVLRYVRQIEEGLINALQSVGINGFRIAGRSGVWVRNGVSDEKVAAIGVRVQKNVTLHGFALNCSNDLAPFEKIVPCGISDAGVTTISRILKRTITPKEILDSVFNSICSALEYINTCRGNV.

The region spanning 42-219 is the BPL/LPL catalytic domain; sequence KNRQASMIFC…SICSALEYIN (178 aa). Residues 79-86, 149-151, and 162-164 each bind substrate; these read RGGKITWH, AIG, and GFA. Catalysis depends on Cys-180, which acts as the Acyl-thioester intermediate.

This sequence belongs to the LipB family.

The protein localises to the cytoplasm. The catalysed reaction is octanoyl-[ACP] + L-lysyl-[protein] = N(6)-octanoyl-L-lysyl-[protein] + holo-[ACP] + H(+). It participates in protein modification; protein lipoylation via endogenous pathway; protein N(6)-(lipoyl)lysine from octanoyl-[acyl-carrier-protein]: step 1/2. In terms of biological role, catalyzes the transfer of endogenously produced octanoic acid from octanoyl-acyl-carrier-protein onto the lipoyl domains of lipoate-dependent enzymes. Lipoyl-ACP can also act as a substrate although octanoyl-ACP is likely to be the physiological substrate. In Tropheryma whipplei (strain TW08/27) (Whipple's bacillus), this protein is Octanoyltransferase.